The following is a 148-amino-acid chain: Gametocyte-specific factor 1-like (148 aa).

2 CHHC U11-48K-type zinc fingers span residues 6–33 (FEIC…RRKN) and 40–67 (MATC…VNRS). Residues Cys-9, His-15, His-25, Cys-29, Cys-43, His-49, His-59, and Cys-63 each contribute to the Zn(2+) site. The segment at 67 to 99 (SAVEEEDTENPLKVSPPSSEQNDDTQQVSPCLP) is disordered. Over residues 82–95 (PPSSEQNDDTQQVS) the composition is skewed to polar residues.

It belongs to the UPF0224 (FAM112) family.

This Homo sapiens (Human) protein is Gametocyte-specific factor 1-like (GTSF1L).